Consider the following 146-residue polypeptide: Putative inactive cytochrome P450 2G1 (146 aa).

Residue C91 coordinates heme.

Belongs to the cytochrome P450 family. Requires heme as cofactor.

This chain is Putative inactive cytochrome P450 2G1 (CYP2G1P), found in Homo sapiens (Human).